A 495-amino-acid chain; its full sequence is MEFLVKSVRPETLKTATLVLAVGEGRKLGASAKAVDDATGGAIGAVLKRGDLAGKVGQTLLLQNLPNLKAERVLLVGAGKERELGDRQYRKLASAVLSTLKGLAGADAVLALGDLAVKGRDAHAKARLLVETLADGLYVFDRYKSQKAEPLKLKKLTLLADKADSAAVEQGSKEAQAIANGMALTRDLGNLPPNVCHPTFLGEQAKALAKEFKGLKVEVHDEQKLRELGMGSFLAVAQGSEQPPRLIVLQYNGAKKDQAPHVLVGKGITFDTGGISLKPGLGMDEMKFDMCGAASVFGTFRAVLELQLPINLVGLLACAENMPSGGATRPGDIVTTMSGQTVEILNTDAEGRLVLCDALTYAERFKPQSVVDIATLTGACIVALGSNTSGLMGNNEALVRQLLKAGEFADDRAWQLPLFDEYQEQLDSPFADIANIGGPKAGTITAGCFLSRFAKKYHWAHLDIAGTAWISGGKDKGATGRPVPLLTQYLLERAK.

Mn(2+)-binding residues include Lys266 and Asp271. Lys278 is a catalytic residue. The Mn(2+) site is built by Asp289, Asp348, and Glu350. Arg352 is a catalytic residue.

Belongs to the peptidase M17 family. Mn(2+) is required as a cofactor.

It localises to the cytoplasm. The catalysed reaction is Release of an N-terminal amino acid, Xaa-|-Yaa-, in which Xaa is preferably Leu, but may be other amino acids including Pro although not Arg or Lys, and Yaa may be Pro. Amino acid amides and methyl esters are also readily hydrolyzed, but rates on arylamides are exceedingly low.. It catalyses the reaction Release of an N-terminal amino acid, preferentially leucine, but not glutamic or aspartic acids.. Its function is as follows. Presumably involved in the processing and regular turnover of intracellular proteins. Catalyzes the removal of unsubstituted N-terminal amino acids from various peptides. The chain is Probable cytosol aminopeptidase from Pseudomonas paraeruginosa (strain DSM 24068 / PA7) (Pseudomonas aeruginosa (strain PA7)).